A 219-amino-acid polypeptide reads, in one-letter code: MSKAQAVRRIGILGGTFDPVHIGHLRSALEVAELMGLDELRLLPNARPPHRDTPQVAAQDRLAMVREAVQGVACLSVDARELERDKPSYTIDTLESIRAELAGNDQLFLVLGWDAFCGLPAWHRWEELLQHCHILVLQRPDADVEPPDELRNLLAARSESDPTAMSGPAGNISFVWQTPLAVSATQIRQLLASGKSVRFLVPDAVLAYIEAHELYRAPN.

Belongs to the NadD family.

The catalysed reaction is nicotinate beta-D-ribonucleotide + ATP + H(+) = deamido-NAD(+) + diphosphate. It participates in cofactor biosynthesis; NAD(+) biosynthesis; deamido-NAD(+) from nicotinate D-ribonucleotide: step 1/1. Catalyzes the reversible adenylation of nicotinate mononucleotide (NaMN) to nicotinic acid adenine dinucleotide (NaAD). This Pseudomonas putida (strain GB-1) protein is Probable nicotinate-nucleotide adenylyltransferase.